A 356-amino-acid chain; its full sequence is MLCLGIESSCDETGLALVRDGKLVAEKLASQVDVHAVFGGVVPEIASREHLRVLPVLLRELLKEQRLTIDDIDVVSVARGPGLQGCLLMGLSFAKGLVLSCGAKLVGVNHLWAHLTAAGLEQDLQFPSLGLLVSGGHTHIYLIESPLQFTLLGRTLDDAAGEAFDKTAKSLNLPYPGGKLVDDLGRQGVVNKKLFPVPYINNDNLDFSFSGLKTAVANYVNQNSNLRLDTMGIPEEGVEEPAISEERKNMLASFNYTVGRTLEVKVERALKRNRGVKSLIVAGGVAANSVVRSVMTDVAAKFSIPLVLPSMHLCTDNGAMIAYAGYLMASAGCRHDLDLDAIPRGRVIPSDWICEG.

Fe cation contacts are provided by His110 and His114. Substrate is bound by residues 132 to 136 (LVSGG), Asp165, Gly178, Asp182, and Asn288. Asp316 serves as a coordination point for Fe cation.

Belongs to the KAE1 / TsaD family. Fe(2+) serves as cofactor.

It localises to the cytoplasm. The catalysed reaction is L-threonylcarbamoyladenylate + adenosine(37) in tRNA = N(6)-L-threonylcarbamoyladenosine(37) in tRNA + AMP + H(+). Required for the formation of a threonylcarbamoyl group on adenosine at position 37 (t(6)A37) in tRNAs that read codons beginning with adenine. Is involved in the transfer of the threonylcarbamoyl moiety of threonylcarbamoyl-AMP (TC-AMP) to the N6 group of A37, together with TsaE and TsaB. TsaD likely plays a direct catalytic role in this reaction. This is tRNA N6-adenosine threonylcarbamoyltransferase from Maridesulfovibrio salexigens (strain ATCC 14822 / DSM 2638 / NCIMB 8403 / VKM B-1763) (Desulfovibrio salexigens).